A 191-amino-acid polypeptide reads, in one-letter code: MPKASEIKKFAAIEHNGKVFLVKDIKKLTPSGRAGASLYRMRLYDVATGSKTDESFKADEMITLADFRRHPVMFSYIDGEEYVFMDSEDYTPYNFNKDSIVEELLFITEDTQGLQVLTVDDLPVAIELPATVDMVISETDPSIKGASASARTKPAIMSTGLSVQVPEYIASGEKIKINTAEQKFMSRADSK.

It belongs to the elongation factor P family.

The sequence is that of Elongation factor P-like protein from Photobacterium profundum (strain SS9).